A 538-amino-acid chain; its full sequence is Lipid scramblase CLPTM1L (538 aa).

Residues 1–9 (MFPKTSFTS) lie on the Cytoplasmic side of the membrane. Residues 10–30 (LIVGVFLLYVLHTCWVMYGIV) traverse the membrane as a helical segment. Residues 31–284 (YTKPCEKRRA…IKGIFVDTNL (254 aa)) lie on the Extracellular side of the membrane. Residues N90 and N100 are each glycosylated (N-linked (GlcNAc...) asparagine). The segment at 140–166 (ISLITGQDEPEKPDQQKQSSDSELDRP) is disordered. N-linked (GlcNAc...) asparagine glycosylation is present at N229. A helical transmembrane segment spans residues 285–305 (YFLALTFFVAAFHLLFDFLAF). The Cytoplasmic segment spans residues 306 to 324 (KNDISFWKHKKSMVGMSSK). Residues 325-341 (AVLWRCFSTIVIFLYLL) form a helical membrane-spanning segment. Topologically, residues 342–402 (DEQTSLLVLV…TEEYDTLAMK (61 aa)) are extracellular. A helical transmembrane segment spans residues 403–423 (YLSYLLYPLCVGGAVYALVFV). At 424 to 428 (KYKSW) the chain is on the cytoplasmic side. A helical membrane pass occupies residues 429 to 449 (YSWIINSLVNGVYAFGFLFML). Over 450–538 (PQLFVNYKLK…EKPKGKSHED (89 aa)) the chain is Extracellular.

This sequence belongs to the CLPTM1 family.

The protein localises to the endoplasmic reticulum membrane. It catalyses the reaction a 6-(alpha-D-glucosaminyl)-1-(1,2-diacyl-sn-glycero-3-phospho)-1D-myo-inositol(in) = a 6-(alpha-D-glucosaminyl)-1-(1,2-diacyl-sn-glycero-3-phospho)-1D-myo-inositol(out). The enzyme catalyses 6-(alpha-D-glucosaminyl)-(1-octadecanoyl,2-(9Z)-octadecenoyl-sn-glycero-3-phospho)-1D-myo-inositol(in) = 6-(alpha-D-glucosaminyl)-(1-octadecanoyl,2-(9Z)-octadecenoyl-sn-glycero-3-phospho)-1D-myo-inositol(out). The catalysed reaction is a 1,2-diacyl-sn-glycero-3-phospho-(1D-myo-inositol)(in) = a 1,2-diacyl-sn-glycero-3-phospho-(1D-myo-inositol)(out). It carries out the reaction a 1,2-diacyl-sn-glycero-3-phosphocholine(in) = a 1,2-diacyl-sn-glycero-3-phosphocholine(out). It catalyses the reaction a 1,2-diacyl-sn-glycero-3-phosphoethanolamine(in) = a 1,2-diacyl-sn-glycero-3-phosphoethanolamine(out). In terms of biological role, scramblase that mediates the translocation of glucosaminylphosphatidylinositol (alpha-D-GlcN-(1-6)-(1,2-diacyl-sn-glycero-3-phospho)-1D-myo-inositol, GlcN-PI) across the endoplasmic reticulum (ER) membrane, from the cytosolic leaflet to the luminal leaflet of the ER membrane, where it participates in the biosynthesis of glycosylphosphatidylinositol (GPI). GPI is a lipid glycoconjugate involved in post-translational modification of proteins. Can also translocate 1,2-diacyl-sn-glycero-3-phospho-(1D-myo-inositol) (phosphatidylinositol or PI), as well as several other phospholipids (1,2-diacyl-sn-glycero-3-phosphocholine, 1,2-diacyl-sn-glycero-3-phosphoethanolamine), and N-acetylglucosaminylphosphatidylinositol (GlcNAc-PI) in vitro. The protein is Lipid scramblase CLPTM1L (clptm1l) of Danio rerio (Zebrafish).